A 371-amino-acid polypeptide reads, in one-letter code: 3-isopropylmalate dehydrogenase (371 aa).

At threonine 55 the chain carries Phosphothreonine. 78-89 (GPEWTNPNCRPE) is an NAD(+) binding site. 4 residues coordinate substrate: arginine 96, arginine 106, arginine 135, and aspartate 224. Mg(2+) is bound by residues aspartate 224, aspartate 249, and aspartate 253. 290 to 302 (GSAPDIAGKGIVN) contacts NAD(+).

Belongs to the isocitrate and isopropylmalate dehydrogenases family. As to quaternary structure, homodimer. Mg(2+) is required as a cofactor. Requires Mn(2+) as cofactor.

The protein localises to the cytoplasm. The catalysed reaction is (2R,3S)-3-isopropylmalate + NAD(+) = 4-methyl-2-oxopentanoate + CO2 + NADH. It functions in the pathway amino-acid biosynthesis; L-leucine biosynthesis; L-leucine from 3-methyl-2-oxobutanoate: step 3/4. Its function is as follows. Catalyzes the oxidation of 3-carboxy-2-hydroxy-4-methylpentanoate (3-isopropylmalate) to 3-carboxy-4-methyl-2-oxopentanoate. The product decarboxylates to 4-methyl-2 oxopentanoate. The protein is 3-isopropylmalate dehydrogenase (leu1) of Schizosaccharomyces pombe (strain 972 / ATCC 24843) (Fission yeast).